We begin with the raw amino-acid sequence, 563 residues long: O-fucosyltransferase 14 (563 aa).

The segment covering 1-16 has biased composition (low complexity); the sequence is MVKVSSSTTSSSSSSS. The segment at 1-25 is disordered; the sequence is MVKVSSSTTSSSSSSSPDEESDLQN. The helical; Signal-anchor for type II membrane protein transmembrane segment at 73-93 threads the bilayer; that stretch reads IFIFLPIVIILIYLSTDFSNY. 3 N-linked (GlcNAc...) asparagine glycosylation sites follow: asparagine 135, asparagine 140, and asparagine 339. Substrate-binding positions include 412–414 and 528–529; these read HFR and TF.

This sequence belongs to the glycosyltransferase GT106 family.

It is found in the membrane. It participates in glycan metabolism. This Arabidopsis thaliana (Mouse-ear cress) protein is O-fucosyltransferase 14.